Reading from the N-terminus, the 371-residue chain is Palmitoyl-monogalactosyldiacylglycerol delta-7 desaturase, chloroplastic (371 aa).

The N-terminal 67 residues, 1–67, are a transit peptide targeting the chloroplast; sequence MASLLTKPKP…KGLKRDVTTA (67 aa). 2 helical membrane-spanning segments follow: residues 103 to 123 and 127 to 147; these read FGAV…PFQF and AVSV…TLSF. Residues 148 to 153 carry the Histidine box-1 motif; sequence HRNLSH. The short motif at 185–189 is the Histidine box-2 element; it reads HRYHH. A helical transmembrane segment spans residues 251–271; the sequence is ALAVALYAMGGFPFIVWGMGV. The short motif at 317–321 is the Histidine box-3 element; it reads HNNHH.

It belongs to the fatty acid desaturase type 1 family. Requires Fe(2+) as cofactor. Highly expressed in young leaves. Low expression in roots.

The protein localises to the plastid. Its subcellular location is the chloroplast membrane. It carries out the reaction a 1-acyl-2-hexadecanoyl-glycerolipid + 2 reduced [2Fe-2S]-[ferredoxin] + O2 + 2 H(+) = a 1-acyl-2-[(7Z)-hexadecenoyl]-glycerolipid + 2 oxidized [2Fe-2S]-[ferredoxin] + 2 H2O. The protein operates within lipid metabolism; oxylipin biosynthesis. It participates in lipid metabolism; polyunsaturated fatty acid biosynthesis. Functionally, fatty acid desaturase involved in the first desaturation step leading to the formation of hexadeca 7,10,13-trienoic acid (16:3(7Z,10Z,13Z)), the major functional components of thylakoid membranes. Required for chloroplast biogenesis at low temperature. Also indirectly involved in the production of the oxylipin dinor-oxo-phyto-dienoic acid implicated in wound signaling. This chain is Palmitoyl-monogalactosyldiacylglycerol delta-7 desaturase, chloroplastic, found in Arabidopsis thaliana (Mouse-ear cress).